The primary structure comprises 456 residues: ATP synthase subunit beta 1 (456 aa).

An ATP-binding site is contributed by 152 to 159 (GGAGVGKS).

It belongs to the ATPase alpha/beta chains family. As to quaternary structure, F-type ATPases have 2 components, CF(1) - the catalytic core - and CF(0) - the membrane proton channel. CF(1) has five subunits: alpha(3), beta(3), gamma(1), delta(1), epsilon(1). CF(0) has three main subunits: a(1), b(2) and c(9-12). The alpha and beta chains form an alternating ring which encloses part of the gamma chain. CF(1) is attached to CF(0) by a central stalk formed by the gamma and epsilon chains, while a peripheral stalk is formed by the delta and b chains.

It is found in the cell membrane. It catalyses the reaction ATP + H2O + 4 H(+)(in) = ADP + phosphate + 5 H(+)(out). Functionally, produces ATP from ADP in the presence of a proton gradient across the membrane. The catalytic sites are hosted primarily by the beta subunits. This is ATP synthase subunit beta 1 from Listeria innocua serovar 6a (strain ATCC BAA-680 / CLIP 11262).